Reading from the N-terminus, the 535-residue chain is Beta-hexosaminidase 3 (535 aa).

Positions 1-24 are cleaved as a signal peptide; it reads MRGSGAKIAGVLPLFMLFIAGTIS. The N-linked (GlcNAc...) asparagine glycan is linked to Asn-92. Cys-292 and Cys-334 are joined by a disulfide. Residue Glu-329 is the Proton donor of the active site. N-linked (GlcNAc...) asparagine glycans are attached at residues Asn-331, Asn-405, Asn-441, and Asn-496. Cys-506 and Cys-532 are oxidised to a cystine.

The protein belongs to the glycosyl hydrolase 20 family. Post-translationally, N-glycosylated. Expressed in roots, leaves, stems, flowers and siliques.

The protein localises to the cell membrane. The catalysed reaction is Hydrolysis of terminal non-reducing N-acetyl-D-hexosamine residues in N-acetyl-beta-D-hexosaminides.. Slightly inhibited by N-acetylcastanospermine. Its function is as follows. Has a broad substrate specificity. Can use synthetic substrates such as pyridylaminated chitotriose, p-nitrophenyl-beta-N-acetylglucosaminide, p-nitrophenyl-2-acetamido-2-deoxy-beta-D-glucopyranoside (pNP-GlcNAc), p-nitrophenyl-2-acetamido-2-deoxy-beta-D-galactopyranoside (pNP-GalNAc), 4-methylumbelliferyl-2-acetamido-2-deoxy-beta-D-glucopyranoside (MU-GlcNAc), and 4-methylumbelliferyl-6-sulfo-2-acetamido-2-deoxy-beta-D-glucopyranoside (MU-GlcNAc-6SO(4)) as substrates. Removes terminal GlcNAc residues from alpha1,3- and alpha1,6-mannosyl branches of biantennary N-glycans without any strict branch preference. Required for the presence of paucimannosidic N-glycans in glycoproteins of roots and leaves. This Arabidopsis thaliana (Mouse-ear cress) protein is Beta-hexosaminidase 3 (HEXO3).